The primary structure comprises 752 residues: Cytosolic phospholipase A2 (752 aa).

The tract at residues 1–178 (MSFIDPYQHI…MKKLLGPKKS (178 aa)) is phospholipid binding. Ser-2 is subject to Phosphoserine. A C2 domain is found at 6-122 (PYQHIIVEHQ…KVGEKKEVPF (117 aa)). Residues Asp-40, Thr-41, Asp-43, Asn-65, Asp-93, Ala-94, and Asn-95 each coordinate Ca(2+). Residues 140–740 (SCPDLRFSMA…SNVEARKFFN (601 aa)) form the PLA2c domain. Ser-228 serves as the catalytic Nucleophile. Thr-268 is subject to Phosphothreonine. The interval 427–457 (KHIVSNDSSDSDDEAQGPKGTENEDAEREYQ) is disordered. Ser-434, Ser-435, and Ser-437 each carry phosphoserine. Residue Ser-505 is modified to Phosphoserine; by MAPK. Phosphoserine is present on residues Ser-511 and Ser-515. Lys-541 is covalently cross-linked (Glycyl lysine isopeptide (Lys-Gly) (interchain with G-Cter in SUMO2)). Asp-549 functions as the Proton acceptor in the catalytic mechanism. A Glycyl lysine isopeptide (Lys-Gly) (interchain with G-Cter in SUMO2) cross-link involves residue Lys-606. Residues Ser-727 and Ser-729 each carry the phosphoserine modification.

Interacts with KAT5. Post-translationally, phosphorylated at both Ser-505 and Ser-727 in response to mitogenic stimuli. In brain tissue, expressed in low levels in olfactory mitral and granule cells, in hippocampal pyramidal cells and in dentate and cerebellar granule cells.

The protein localises to the cytoplasm. Its subcellular location is the golgi apparatus membrane. It localises to the nucleus envelope. It catalyses the reaction a 1,2-diacyl-sn-glycero-3-phosphocholine + H2O = a 1-acyl-sn-glycero-3-phosphocholine + a fatty acid + H(+). The catalysed reaction is a 1-O-alkyl-2-acyl-sn-glycero-3-phosphocholine + H2O = a 1-O-alkyl-sn-glycero-3-phosphocholine + a fatty acid + H(+). It carries out the reaction a 1-acyl-sn-glycero-3-phosphocholine + H2O = sn-glycerol 3-phosphocholine + a fatty acid + H(+). The enzyme catalyses 1-hexadecanoyl-2-(5Z,8Z,11Z,14Z-eicosatetraenoyl)-sn-glycero-3-phosphocholine + H2O = 1-hexadecanoyl-sn-glycero-3-phosphocholine + (5Z,8Z,11Z,14Z)-eicosatetraenoate + H(+). It catalyses the reaction 1,2-di-(5Z,8Z,11Z,14Z-eicosatetraenoyl)-sn-glycero-3-phosphocholine + H2O = 1-(5Z,8Z,11Z,14Z-eicosatetraenoyl)-sn-glycero-3-phosphocholine + (5Z,8Z,11Z,14Z)-eicosatetraenoate + H(+). The catalysed reaction is 1-octadecanoyl-2-(5Z,8Z,11Z,14Z-eicosatetraenoyl)-sn-glycero-3-phosphocholine + H2O = 1-octadecanoyl-sn-glycero-3-phosphocholine + (5Z,8Z,11Z,14Z)-eicosatetraenoate + H(+). It carries out the reaction 1-hexadecanoyl-2-(9Z,12Z-octadecadienoyl)-sn-glycero-3-phosphocholine + H2O = (9Z,12Z)-octadecadienoate + 1-hexadecanoyl-sn-glycero-3-phosphocholine + H(+). The enzyme catalyses 1-octadecanoyl-2-(9Z,12Z,15Z-octadecatrienoyl)-sn-glycero-3-phosphocholine + H2O = (9Z,12Z,15Z)-octadecatrienoate + 1-octadecanoyl-sn-glycero-3-phosphocholine + H(+). It catalyses the reaction 1-(5Z,8Z,11Z,14Z-eicosatetraenoyl)-2-hexadecanoyl-sn-glycero-3-phosphocholine + H2O = 1-(5Z,8Z,11Z,14Z-eicosatetraenoyl)-sn-glycero-3-phosphocholine + hexadecanoate + H(+). The catalysed reaction is 1-O-hexadecyl-2-(5Z,8Z,11Z,14Z)-eicosatetraenoyl-sn-glycero-3-phosphocholine + H2O = 1-O-hexadecyl-sn-glycero-3-phosphocholine + (5Z,8Z,11Z,14Z)-eicosatetraenoate + H(+). It carries out the reaction 1,2-di-(9Z-octadecenoyl)-sn-glycero-3-phospho-(1'-sn-glycerol) + H2O = 1-(9Z-octadecenoyl)-sn-glycero-3-phospho-(1'-sn-glycerol) + (9Z)-octadecenoate + H(+). The enzyme catalyses 1-octadecanoyl-2-(5Z,8Z,11Z,14Z-eicosatetraenoyl)-sn-glycero-3-phosphate + H2O = 1-octadecanoyl-sn-glycero-3-phosphate + (5Z,8Z,11Z,14Z)-eicosatetraenoate + H(+). It catalyses the reaction 1-hexadecanoyl-sn-glycero-3-phosphocholine + H2O = sn-glycerol 3-phosphocholine + hexadecanoate + H(+). The catalysed reaction is 2-(prostaglandin E2)-sn-glycero-3-phosphoethanolamine + H2O = sn-glycero-3-phosphoethanolamine + prostaglandin E2 + H(+). It carries out the reaction 2-[(15S)-hydroxy-(5Z,8Z,11Z,13E)-eicosatetraenoyl]-sn-glycero-3-phosphocholine + H2O = (15S)-hydroxy-(5Z,8Z,11Z,13E)-eicosatetraenoate + sn-glycerol 3-phosphocholine + H(+). The enzyme catalyses 2-[(15R)-hydroxy-(5Z,8Z,11Z,13E)-eicosatetraenoyl]-sn-glycero-3-phosphocholine + H2O = (15R)-hydroxy-(5Z,8Z,11Z,13E)-eicosatetraenoate + sn-glycerol 3-phosphocholine + H(+). It catalyses the reaction 2-(prostaglandin E2)-sn-glycero-3-phosphocholine + H2O = prostaglandin E2 + sn-glycerol 3-phosphocholine + H(+). The catalysed reaction is 2-[(11R)-hydroxy-(5Z,8Z,12E,14Z)-eicosatetraenoyl]-sn-glycero-3-phosphocholine + H2O = (11R)-hydroxy-(5Z,8Z,12E,14Z)-eicosatetraenoate + sn-glycerol 3-phosphocholine + H(+). It carries out the reaction 1-(5Z,8Z,11Z,14Z-eicosatetraenoyl)-2-O-hexadecyl-sn-glycero-3-phosphocholine + H2O = 2-O-hexadecyl-sn-glycero-3-phosphocholine + (5Z,8Z,11Z,14Z)-eicosatetraenoate + H(+). The enzyme catalyses 1-octadecanoyl-2-(5Z,8Z,11Z,14Z-eicosatetraenoyl)-sn-glycero-3-phosphocholine + glycerol = 1-(5Z,8Z,11Z,14Z-eicosatetraenoyl)-glycerol + 1-octadecanoyl-sn-glycero-3-phosphocholine. It catalyses the reaction 1-octadecanoyl-2-(9Z,12Z,15Z-octadecatrienoyl)-sn-glycero-3-phosphocholine + glycerol = 1-(9Z,12Z,15Z-octadecatrienoyl)-glycerol + 1-octadecanoyl-sn-glycero-3-phosphocholine. The protein operates within lipid metabolism; arachidonate metabolism. It participates in membrane lipid metabolism; glycerophospholipid metabolism. It functions in the pathway lipid metabolism; prostaglandin biosynthesis. Its pathway is lipid metabolism; leukotriene B4 biosynthesis. Its activity is regulated as follows. Activated by cytosolic calcium, which is necessary for binding to membrane lipids. Activated by phosphorylation in response to mitogenic stimuli. Functionally, has primarily calcium-dependent phospholipase and lysophospholipase activities, with a major role in membrane lipid remodeling and biosynthesis of lipid mediators of the inflammatory response. Plays an important role in embryo implantation and parturition through its ability to trigger prostanoid production. Preferentially hydrolyzes the ester bond of the fatty acyl group attached at sn-2 position of phospholipids (phospholipase A2 activity). Selectively hydrolyzes sn-2 arachidonoyl group from membrane phospholipids, providing the precursor for eicosanoid biosynthesis via the cyclooxygenase pathway. In an alternative pathway of eicosanoid biosynthesis, hydrolyzes sn-2 fatty acyl chain of eicosanoid lysophopholipids to release free bioactive eicosanoids. Hydrolyzes the ester bond of the fatty acyl group attached at sn-1 position of phospholipids (phospholipase A1 activity) only if an ether linkage rather than an ester linkage is present at the sn-2 position. This hydrolysis is not stereospecific. Has calcium-independent phospholipase A2 and lysophospholipase activities in the presence of phosphoinositides. Has O-acyltransferase activity. Catalyzes the transfer of fatty acyl chains from phospholipids to a primary hydroxyl group of glycerol (sn-1 or sn-3), potentially contributing to monoacylglycerol synthesis. This chain is Cytosolic phospholipase A2 (Pla2g4a), found in Rattus norvegicus (Rat).